The chain runs to 212 residues: Cytochrome c biogenesis ATP-binding export protein CcmA (212 aa).

Residues 7–209 (LSLQNLSCQR…HLQKLNLAAY (203 aa)) form the ABC transporter domain. 39–46 (GHNGIGKT) is an ATP binding site.

Belongs to the ABC transporter superfamily. CcmA exporter (TC 3.A.1.107) family. As to quaternary structure, the complex is composed of two ATP-binding proteins (CcmA) and two transmembrane proteins (CcmB).

It localises to the cell inner membrane. It carries out the reaction heme b(in) + ATP + H2O = heme b(out) + ADP + phosphate + H(+). Functionally, part of the ABC transporter complex CcmAB involved in the biogenesis of c-type cytochromes; once thought to export heme, this seems not to be the case, but its exact role is uncertain. Responsible for energy coupling to the transport system. In Haemophilus influenzae (strain ATCC 51907 / DSM 11121 / KW20 / Rd), this protein is Cytochrome c biogenesis ATP-binding export protein CcmA.